We begin with the raw amino-acid sequence, 1338 residues long: Thioester-containing protein 1 allele R1 (1338 aa).

An N-terminal signal peptide occupies residues methionine 1 to glycine 21. N-linked (GlcNAc...) asparagine glycosylation is found at asparagine 68, asparagine 199, asparagine 242, asparagine 312, and asparagine 481. The may contain the cleavage site stretch occupies residues glutamate 580–glycine 609. N-linked (GlcNAc...) asparagine glycans are attached at residues asparagine 637, asparagine 728, and asparagine 813. The isoglutamyl cysteine thioester (Cys-Gln) cross-link spans cysteine 859–glutamine 862. 2 N-linked (GlcNAc...) asparagine glycosylation sites follow: asparagine 919 and asparagine 1065. Intrachain disulfides connect cysteine 1217-cysteine 1283, cysteine 1326-cysteine 1338, and cysteine 1329-cysteine 1334.

As to quaternary structure, heterodimer of a TEP1-N chain and an TEP1-C chain non-covalently linked. Forms a complex composed of TEP1-N and TEP1-C heterodimer, LRIM1 and APL1C; the interaction stabilizes TEP1-N and TEP1-C heterodimer, prevents its binding to tissues while circulating in the hemolymph and protects the thioester bond from hydrolysis. Mature TEP1 and to a lesser extent full-length TEP1 interact with SPCLIP1; the interaction is induced by microbial infection. Post-translationally, in the hemolymph, the full-length protein is cleaved by an unknow protease into a 75kDa N-terminal (TEP1-N) chain and an 80kDa C-terminal (TEP1-C) chain which remain non-covalently linked. The TEP1-C chain contains the thioester bond which covalently binds to the pathogen surface. Cleavage is induced by bacterial infection or aseptic wound injury. During embryonic and pupal development, the cleaved form is the predominant form. In terms of processing, N-glycosylated.

The protein resides in the secreted. In terms of biological role, plays an essential role in the innate immune response against bacteria, fungi and protozoa infection. After proteolytic cleavage, the protein C-terminus binds covalently through a thioester bond to the pathogen surface resulting in pathogen clearance either by melanization or lysis. Initiate the recruitment and activation of a cascade of proteases, mostly of CLIP-domain serine proteases, which leads to the proteolytic cleavage of the prophenoloxidase (PPO) into active phenoloxidase (PO), the rate-limiting enzyme in melanin biosynthesis. In response to parasite P.berghei-mediated infection, binds to and mediates killing of ookinetes, as they egress from midgut epithelial cells into the basal labyrinth, by both lysis and melanization. During bacterial infection, binds to both Gram-positive and Gram-negative bacteria but only promotes phagocytosis of Gram-negative bacteria. Promotes the accumulation of SPCLIP1 onto the surface of P.berghei ookinetes and bacterium E.coli which leads to the melanization of the pathogen. Recruits CLIPA2 to bacteria surface. In response to bacterial infection, required for periostial hemocyte aggregation, but not for the aggregation of sessile hemocytes in non-periostial regions. During the late stage of fungus B.bassiana-mediated infection, required for the initiation of hyphae melanization by binding to the surface of hyphae and recruiting prophenoloxidase PPO to them. Plays a role in male fertility by binding to defective sperm cells and promoting their removal during spermatogenesis. Binds to and mediates killing of parasite P.bergei ookinetes by lysis and melanization. Functionally, binds covalently through a thioester bond to the pathogen surface resulting in pathogen clearance. In Anopheles gambiae (African malaria mosquito), this protein is Thioester-containing protein 1 allele R1.